We begin with the raw amino-acid sequence, 223 residues long: Carnitine transport permease protein OpuCD (223 aa).

One can recognise an ABC transmembrane type-1 domain in the interval 22–202; sequence FWRHFLMSAY…VMAILADVLL (181 aa). The next 5 membrane-spanning stretches (helical) occupy residues 27-47, 63-83, 87-107, 148-168, and 182-202; these read LMSAYGVIFAAIIAIPLGVYI, IIQTIPALAMLAVLMLIMGLG, VVLSLFLYSLLPILKNTYTGI, ALVIAIGVAAIGTFVGAGGLG, and AIILAGAIPTAVMAILADVLL.

Belongs to the binding-protein-dependent transport system permease family. As to quaternary structure, the complex is composed of two ATP-binding proteins (OpuCA), two transmembrane proteins (OpuCB and OpuCD) and a solute-binding protein (OpuCC).

The protein resides in the cell membrane. Part of the ABC transporter complex OpuCABCD involved in carnitine uptake. Probably responsible for the translocation of the substrate across the membrane. Involved, with BetL and GbuABC, in osmoprotection and cryoprotection of Listeria. Can also mediate weak glycine betaine transport. In Listeria monocytogenes serotype 1/2a (strain 10403S), this protein is Carnitine transport permease protein OpuCD (opuCD).